Reading from the N-terminus, the 331-residue chain is MLEHGGRLREAARRYDIPLADWLDLSTGIAPWPFSLPAIPEQAWTRLPESDDGLEAAACLYYGAERVLPLAGSQAAIQALPRMRRGGRVGVLSPCYAEHAHAWRQAGHLVREIGEAEVEPYLDSLDVLLVVNPNNPTGRVFEPAELLAWHARLQRRGGWLLVDEAFMDCTPQSSLAACSNRPGLIVLRSFGKFFGLAGARLGFALGERPLLQALAEQLGPWTVNGPVRHVAQSALRDRQQQRQQRERLLAASQRLEELLRRHGWPPAGGSALFQRLVDPRCAALHDYLARRGILTRQFEQPASLRLGLPADEAAWARLDAALLGFKEPAHE.

The residue at position 192 (K192) is an N6-(pyridoxal phosphate)lysine.

Belongs to the class-I pyridoxal-phosphate-dependent aminotransferase family. In terms of assembly, homodimer. The cofactor is pyridoxal 5'-phosphate.

Its subcellular location is the cytoplasm. It carries out the reaction O-phospho-L-threonine + H(+) = (R)-1-aminopropan-2-yl phosphate + CO2. The protein operates within cofactor biosynthesis; adenosylcobalamin biosynthesis. Its function is as follows. Decarboxylates L-threonine-O-3-phosphate to yield (R)-1-amino-2-propanol O-2-phosphate, the precursor for the linkage between the nucleotide loop and the corrin ring in cobalamin. This Pseudomonas aeruginosa (strain ATCC 15692 / DSM 22644 / CIP 104116 / JCM 14847 / LMG 12228 / 1C / PRS 101 / PAO1) protein is Threonine-phosphate decarboxylase (cobC).